The chain runs to 166 residues: CDP-archaeol synthase (166 aa).

4 helical membrane-spanning segments follow: residues 42–62 (LVLG…VQDA), 73–93 (VLSV…KSFV), 103–123 (AAWP…LLLI), and 128–148 (FAAV…TPLL).

It belongs to the CDP-archaeol synthase family. Mg(2+) serves as cofactor.

It localises to the cell membrane. The enzyme catalyses 2,3-bis-O-(geranylgeranyl)-sn-glycerol 1-phosphate + CTP + H(+) = CDP-2,3-bis-O-(geranylgeranyl)-sn-glycerol + diphosphate. It functions in the pathway membrane lipid metabolism; glycerophospholipid metabolism. In terms of biological role, catalyzes the formation of CDP-2,3-bis-(O-geranylgeranyl)-sn-glycerol (CDP-archaeol) from 2,3-bis-(O-geranylgeranyl)-sn-glycerol 1-phosphate (DGGGP) and CTP. This reaction is the third ether-bond-formation step in the biosynthesis of archaeal membrane lipids. The protein is CDP-archaeol synthase of Methanosphaerula palustris (strain ATCC BAA-1556 / DSM 19958 / E1-9c).